The chain runs to 65 residues: Large ribosomal subunit protein bL33 (65 aa).

The disordered stretch occupies residues 19 to 40 (TVPSSKKRSAGVSRYTTEKNRR).

Belongs to the bacterial ribosomal protein bL33 family.

In Prochlorococcus marinus (strain NATL2A), this protein is Large ribosomal subunit protein bL33.